Consider the following 127-residue polypeptide: Stationary phase protein 3 (127 aa).

Transmembrane regions (helical) follow at residues 29 to 49 (LFLFLFVFVFVFIFVYFFYVI) and 63 to 83 (ANSIWYYLSIINIFFPLCFFL). A glycan (N-linked (GlcNAc...) asparagine) is linked at Asn86.

Its subcellular location is the membrane. Its function is as follows. Required for survival during stationary phase. The sequence is that of Stationary phase protein 3 (SPG3) from Saccharomyces cerevisiae (strain ATCC 204508 / S288c) (Baker's yeast).